The sequence spans 488 residues: MKYKDLRDFIDLLEKRGELKRITQEIDPYLEMTEIADRTLRAKGPALLFENPKGYDIPVLANLFGTPKRVAMGMGQEDVSELREVGKLLAFLKEPEPPKGIKEALGQIPVYKQVLNMPAKEVKKAPCQEVILQGDEVDLTKLPIQHCWPGDAAPLITWGLTVTKGPYKKRQNLGIYRQQLLGKNKIIMRWLSHRGGALDFQEWCKENPGQPYPVSVALGADPATILGAVTPVPDTLSEYAFAGLLRGSKTEVVKSISNDLQVPASAEIVLEGYIMPGEMAPEGPYGDHTGYYNEVDDFPVMTVTHMTHRKNPIYHSTFTGRPPDEPAILGVALNEVFVPILQKQFPEIVDFYLPPEGCSYRMAIVTMKKQYPGHAKRVMMGVWSYLRQFMYTKFVIVCDDDINARDWEDVIWAITTRMDPARDTTLIENTPIDYLDFASPVSGLGSKMGMDATNKWPGETNREWGEPIEMDKATKDRVDDIWQSLNIL.

Asn-172 serves as a coordination point for Mn(2+). Residues 175-177 (IYR), 189-191 (RWL), and 194-195 (RG) each bind prenylated FMN. A Mn(2+)-binding site is contributed by Glu-238. The Proton donor role is filled by Asp-287.

This sequence belongs to the UbiD family. Homohexamer. It depends on prenylated FMN as a cofactor. Mn(2+) serves as cofactor.

It localises to the cell membrane. The enzyme catalyses a 4-hydroxy-3-(all-trans-polyprenyl)benzoate + H(+) = a 2-(all-trans-polyprenyl)phenol + CO2. The protein operates within cofactor biosynthesis; ubiquinone biosynthesis. In terms of biological role, catalyzes the decarboxylation of 3-octaprenyl-4-hydroxy benzoate to 2-octaprenylphenol, an intermediate step in ubiquinone biosynthesis. This chain is 3-octaprenyl-4-hydroxybenzoate carboxy-lyase, found in Pseudoalteromonas translucida (strain TAC 125).